We begin with the raw amino-acid sequence, 207 residues long: Redox-sensing transcriptional repressor Rex (207 aa).

The H-T-H motif DNA-binding region spans 17 to 56 (IYLRYLSYLQQVEVTTVSSQQMGKNLDVNPAQIRKDLAAF). 91–96 (GAGHLG) is an NAD(+) binding site.

It belongs to the transcriptional regulatory Rex family. In terms of assembly, homodimer.

The protein resides in the cytoplasm. In terms of biological role, modulates transcription in response to changes in cellular NADH/NAD(+) redox state. In Brevibacillus brevis (strain 47 / JCM 6285 / NBRC 100599), this protein is Redox-sensing transcriptional repressor Rex.